A 194-amino-acid chain; its full sequence is ATP-dependent Clp protease proteolytic subunit (194 aa).

Ser97 serves as the catalytic Nucleophile. His122 is an active-site residue.

It belongs to the peptidase S14 family. In terms of assembly, fourteen ClpP subunits assemble into 2 heptameric rings which stack back to back to give a disk-like structure with a central cavity, resembling the structure of eukaryotic proteasomes.

It is found in the cytoplasm. It carries out the reaction Hydrolysis of proteins to small peptides in the presence of ATP and magnesium. alpha-casein is the usual test substrate. In the absence of ATP, only oligopeptides shorter than five residues are hydrolyzed (such as succinyl-Leu-Tyr-|-NHMec, and Leu-Tyr-Leu-|-Tyr-Trp, in which cleavage of the -Tyr-|-Leu- and -Tyr-|-Trp bonds also occurs).. In terms of biological role, cleaves peptides in various proteins in a process that requires ATP hydrolysis. Has a chymotrypsin-like activity. Plays a major role in the degradation of misfolded proteins. In Lactobacillus helveticus (strain DPC 4571), this protein is ATP-dependent Clp protease proteolytic subunit.